Reading from the N-terminus, the 402-residue chain is uncharacterized protein (402 aa).

This is an uncharacterized protein from Ostreid herpesvirus 1 (isolate France) (OsHV-1).